A 717-amino-acid chain; its full sequence is Polyribonucleotide nucleotidyltransferase (717 aa).

Mg(2+)-binding residues include Asp496 and Asp502. The KH domain occupies 563–622; that stretch reads PRLLSFKIDPEMIGLVIGPGGKTIKGITEETGVKIDIDDDGTVTIAAADGEKAKQACNII. One can recognise an S1 motif domain in the interval 632 to 700; the sequence is GDVYVGRVTR…SKGRVNLTRL (69 aa).

Belongs to the polyribonucleotide nucleotidyltransferase family. It depends on Mg(2+) as a cofactor.

It is found in the cytoplasm. The enzyme catalyses RNA(n+1) + phosphate = RNA(n) + a ribonucleoside 5'-diphosphate. In terms of biological role, involved in mRNA degradation. Catalyzes the phosphorolysis of single-stranded polyribonucleotides processively in the 3'- to 5'-direction. The chain is Polyribonucleotide nucleotidyltransferase from Trichodesmium erythraeum (strain IMS101).